The chain runs to 264 residues: Hydroxyethylthiazole kinase (264 aa).

Substrate is bound at residue M55. The ATP site is built by R130 and S176. Substrate is bound at residue G203.

It belongs to the Thz kinase family. Mg(2+) is required as a cofactor.

The catalysed reaction is 5-(2-hydroxyethyl)-4-methylthiazole + ATP = 4-methyl-5-(2-phosphooxyethyl)-thiazole + ADP + H(+). It participates in cofactor biosynthesis; thiamine diphosphate biosynthesis; 4-methyl-5-(2-phosphoethyl)-thiazole from 5-(2-hydroxyethyl)-4-methylthiazole: step 1/1. Catalyzes the phosphorylation of the hydroxyl group of 4-methyl-5-beta-hydroxyethylthiazole (THZ). This is Hydroxyethylthiazole kinase from Leptospira borgpetersenii serovar Hardjo-bovis (strain JB197).